Consider the following 175-residue polypeptide: MATERKSRTKRAKKEETTWQERVIQIRRVSKVVKGGKKLSFRAIVVVGNERGQVGVGVGKASDVIGAVKKGVADGKKHLIDIPITKSNSIPHPIDGVGGGAKVIMRPAAPGTGVIAGGAVRTVLELAGVRNVLAKQLGSNNPLNNARAAVNALSTLRTLSEVAEDRGIPIQNLYI.

In terms of domain architecture, S5 DRBM spans 19–82 (WQERVIQIRR…ADGKKHLIDI (64 aa)).

This sequence belongs to the universal ribosomal protein uS5 family. In terms of assembly, part of the 30S ribosomal subunit. Contacts proteins S4 and S8.

In terms of biological role, with S4 and S12 plays an important role in translational accuracy. Its function is as follows. Located at the back of the 30S subunit body where it stabilizes the conformation of the head with respect to the body. This Nostoc punctiforme (strain ATCC 29133 / PCC 73102) protein is Small ribosomal subunit protein uS5.